Here is a 580-residue protein sequence, read N- to C-terminus: Amino-acid acetyltransferase, mitochondrial (580 aa).

The N-acetyltransferase domain occupies 403–560 (LTMQNLFDDK…NPRHKNGVVN (158 aa)).

It belongs to the acetyltransferase family.

The protein localises to the mitochondrion. The catalysed reaction is L-glutamate + acetyl-CoA = N-acetyl-L-glutamate + CoA + H(+). It functions in the pathway amino-acid biosynthesis; L-arginine biosynthesis; N(2)-acetyl-L-ornithine from L-glutamate: step 1/4. Its function is as follows. N-acetylglutamate synthase involved in arginine biosynthesis. This Candida dubliniensis (strain CD36 / ATCC MYA-646 / CBS 7987 / NCPF 3949 / NRRL Y-17841) (Yeast) protein is Amino-acid acetyltransferase, mitochondrial (ARG2).